Consider the following 361-residue polypeptide: Protein phosphatase 1 regulatory subunit 7 (361 aa).

A disordered region spans residues 1–64 (MAAERGAGQQ…RGAEDPEEEH (64 aa)). The residue at position 2 (Ala2) is an N-acetylalanine. Phosphoserine occurs at positions 12, 24, 27, 45, and 48. The span at 17 to 34 (EVDRRVESEESGDEEGKK) shows a compositional bias: basic and acidic residues. Positions 48 to 58 (SLKDGVDRGAE) are enriched in basic and acidic residues. LRR repeat units follow at residues 78 to 99 (DAED…EVLK), 100 to 121 (KVKS…EELQ), 122 to 143 (SLRE…EALT), 144 to 165 (ELEV…DKLT), 166 to 187 (QLKK…SNLH), 188 to 209 (QLQM…DTLT), 210 to 231 (NLES…DALT), 232 to 253 (NLTV…QSLV), 254 to 275 (NLRE…ENNN), 276 to 297 (KLTM…SHLT), and 298 to 319 (ELQE…DELK). Ser323 is subject to Phosphoserine. The LRRCT domain maps to 332 to 361 (NPLQKDPQYRRKVMLALPSVRQIDATYVRF).

The protein belongs to the SDS22 family. In terms of assembly, interacts with PPP1CA, PPP1CB and PPP1CC/PPP1G. Widely expressed with high level in testis. Expression increases during puberty. Expressed in spermatids and probably also in spermatozoa.

The protein localises to the nucleus. Its function is as follows. Regulatory subunit of protein phosphatase 1. The sequence is that of Protein phosphatase 1 regulatory subunit 7 (Ppp1r7) from Mus musculus (Mouse).